The following is a 109-amino-acid chain: Flagellar hook-basal body complex protein FliE (109 aa).

It belongs to the FliE family.

It localises to the bacterial flagellum basal body. This Pseudomonas aeruginosa (strain LESB58) protein is Flagellar hook-basal body complex protein FliE.